We begin with the raw amino-acid sequence, 405 residues long: Cytoplasmic tRNA 2-thiolation protein 2 (405 aa).

It belongs to the CTU2/NCS2 family.

The protein localises to the cytoplasm. Its pathway is tRNA modification; 5-methoxycarbonylmethyl-2-thiouridine-tRNA biosynthesis. Functionally, plays a central role in 2-thiolation of mcm(5)S(2)U at tRNA wobble positions of tRNA(Lys), tRNA(Glu) and tRNA(Gln). May act by forming a heterodimer with NCS6/CTU1 that ligates sulfur from thiocarboxylated URM1 onto the uridine of tRNAs at wobble position. The sequence is that of Cytoplasmic tRNA 2-thiolation protein 2 from Drosophila simulans (Fruit fly).